The following is a 514-amino-acid chain: Periplasmic [NiFeSe] hydrogenase large subunit (514 aa).

A Fe cation-binding site is contributed by Glu52. Ni(2+) contacts are provided by Cys71 and Cys74. Cys74 and Ile445 together coordinate Fe cation. Ni(2+) is bound by residues Sec493 and Cys496. Sec493 is a non-standard amino acid (selenocysteine). 2 residues coordinate Fe cation: Cys496 and His499.

This sequence belongs to the [NiFe]/[NiFeSe] hydrogenase large subunit family. Heterodimer of a large and a small subunit. The cofactor is Fe cation. It depends on Ni(2+) as a cofactor.

The protein localises to the periplasm. It catalyses the reaction H2 + A = AH2. The sequence is that of Periplasmic [NiFeSe] hydrogenase large subunit from Desulfomicrobium baculatum (Desulfovibrio baculatus).